The following is a 396-amino-acid chain: MSKEKFERTKPHVNVGTIGHIDHGKTTLTAAITRVLSTKGQASFTDFSDIDKAPEEKERGITIATAHVEYETVNRHYAHVDCPGHADYIKNMITGAAQMDGAILVVAATDGAMPQTREHILLARQVGVPAMVVFLNKCDMVDDDELIELVEMELRELLDDYEFPGDDVPFIHGSALLALENPEDEDKAACIWALMEAIDSYIPEPERDVDQPFLMPVEDVFSISGRGTVATGRVERGIIKVGEEVAIVGVKDTVKTTCTGVEMFRKLLDEGRAGDNIGALLRGVKREDIERGQVLAKPGTITPHTKFKAECYILGKDEGGRHTPFFNGYRPQFYFRTTDVTGVVSLPEGIEMVMPGDNVSVDATLITPIAMDAGLRFAIREGGRTVGAGVISEIIE.

Positions 10–206 (KPHVNVGTIG…AIDSYIPEPE (197 aa)) constitute a tr-type G domain. The tract at residues 19 to 26 (GHIDHGKT) is G1. GTP is bound at residue 19 to 26 (GHIDHGKT). Thr-26 is a binding site for Mg(2+). Positions 60-64 (GITIA) are G2. A G3 region spans residues 81–84 (DCPG). Residues 81–85 (DCPGH) and 136–139 (NKCD) each bind GTP. Positions 136 to 139 (NKCD) are G4. The tract at residues 174-176 (SAL) is G5.

It belongs to the TRAFAC class translation factor GTPase superfamily. Classic translation factor GTPase family. EF-Tu/EF-1A subfamily. In terms of assembly, monomer.

It localises to the cytoplasm. It catalyses the reaction GTP + H2O = GDP + phosphate + H(+). Functionally, GTP hydrolase that promotes the GTP-dependent binding of aminoacyl-tRNA to the A-site of ribosomes during protein biosynthesis. This chain is Elongation factor Tu 2, found in Desulfotalea psychrophila (strain LSv54 / DSM 12343).